We begin with the raw amino-acid sequence, 128 residues long: Ribonuclease P protein component (128 aa).

This sequence belongs to the RnpA family. Consists of a catalytic RNA component (M1 or rnpB) and a protein subunit.

It carries out the reaction Endonucleolytic cleavage of RNA, removing 5'-extranucleotides from tRNA precursor.. RNaseP catalyzes the removal of the 5'-leader sequence from pre-tRNA to produce the mature 5'-terminus. It can also cleave other RNA substrates such as 4.5S RNA. The protein component plays an auxiliary but essential role in vivo by binding to the 5'-leader sequence and broadening the substrate specificity of the ribozyme. The protein is Ribonuclease P protein component of Prochlorococcus marinus (strain NATL2A).